Consider the following 159-residue polypeptide: Large ribosomal subunit protein uL22 (159 aa).

Belongs to the universal ribosomal protein uL22 family. As to quaternary structure, part of the 50S ribosomal subunit.

In terms of biological role, this protein binds specifically to 23S rRNA. It makes multiple contacts with different domains of the 23S rRNA in the assembled 50S subunit and ribosome. Functionally, the globular domain of the protein is located near the polypeptide exit tunnel on the outside of the subunit, while an extended beta-hairpin is found that lines the wall of the exit tunnel in the center of the 70S ribosome. The polypeptide is Large ribosomal subunit protein uL22 (Ignicoccus hospitalis (strain KIN4/I / DSM 18386 / JCM 14125)).